Here is a 180-residue protein sequence, read N- to C-terminus: ATP-dependent protease subunit HslV (180 aa).

Residue Thr-8 is part of the active site. Residues Ala-165, Cys-168, and Thr-171 each coordinate Na(+).

It belongs to the peptidase T1B family. HslV subfamily. In terms of assembly, a double ring-shaped homohexamer of HslV is capped on each side by a ring-shaped HslU homohexamer. The assembly of the HslU/HslV complex is dependent on binding of ATP.

It localises to the cytoplasm. It carries out the reaction ATP-dependent cleavage of peptide bonds with broad specificity.. Allosterically activated by HslU binding. Its function is as follows. Protease subunit of a proteasome-like degradation complex believed to be a general protein degrading machinery. This is ATP-dependent protease subunit HslV from Macrococcus caseolyticus (strain JCSC5402) (Macrococcoides caseolyticum).